The primary structure comprises 540 residues: Tyrosinase (540 aa).

A signal peptide spans 1–19 (MKSLFLSAVLLQFFETCWS). The Lumenal, melanosome portion of the chain corresponds to 20–480 (QFPRPCANSE…LQQAQQIWQW (461 aa)). Asn-87 carries N-linked (GlcNAc...) asparagine glycosylation. Residues His-182, His-205, and His-214 each contribute to the Cu cation site. 3 N-linked (GlcNAc...) asparagine glycosylation sites follow: Asn-233, Asn-293, and Asn-340. 2 residues coordinate Cu cation: His-366 and His-370. Residue Asn-374 is glycosylated (N-linked (GlcNAc...) asparagine). Cu cation is bound at residue His-393. The helical transmembrane segment at 481–501 (LLGAGILGALIATIVAAVIVF) threads the bilayer. The Cytoplasmic segment spans residues 502–540 (ARRKRRRNQKRKRAPSFGERQPLLQSSSEEGSSSYQTTL). The tract at residues 511–540 (KRKRAPSFGERQPLLQSSSEEGSSSYQTTL) is disordered. The segment covering 527-540 (SSSEEGSSSYQTTL) has biased composition (low complexity).

This sequence belongs to the tyrosinase family. It depends on Cu(2+) as a cofactor.

It is found in the melanosome membrane. The catalysed reaction is 2 L-dopa + O2 = 2 L-dopaquinone + 2 H2O. It carries out the reaction L-tyrosine + O2 = L-dopaquinone + H2O. In terms of biological role, this is a copper-containing oxidase that functions in the formation of pigments such as melanins and other polyphenolic compounds. In Oryzias latipes (Japanese rice fish), this protein is Tyrosinase (tyr).